The sequence spans 758 residues: 52 kDa repressor of the inhibitor of the protein kinase (758 aa).

Residues 1–86 (MPNFCAAPNC…LRDNAIPTIF (86 aa)) form a THAP-type zinc finger. The interval 116–141 (QKKIEETSEQEQETNTNAQNPSAEAV) is disordered. Position 563 is a phosphoserine (Ser-563).

Interacts with DNAJC3, probably sequestring it.

In terms of biological role, upstream regulator of interferon-induced serine/threonine protein kinase R (PKR). May block the PKR-inhibitory function of DNAJC3, resulting in restoration of kinase activity and suppression of cell growth. This chain is 52 kDa repressor of the inhibitor of the protein kinase, found in Mus musculus (Mouse).